We begin with the raw amino-acid sequence, 246 residues long: Probable transcriptional regulatory protein COSY_0365 (246 aa).

Belongs to the TACO1 family.

It is found in the cytoplasm. In Vesicomyosocius okutanii subsp. Calyptogena okutanii (strain HA), this protein is Probable transcriptional regulatory protein COSY_0365.